The chain runs to 131 residues: Glycine cleavage system H protein (131 aa).

The Lipoyl-binding domain maps to 24 to 106; that stretch reads IATIGISAFA…YGEGWLLKLR (83 aa). Lys65 is subject to N6-lipoyllysine.

This sequence belongs to the GcvH family. The glycine cleavage system is composed of four proteins: P, T, L and H. Requires (R)-lipoate as cofactor.

Its function is as follows. The glycine cleavage system catalyzes the degradation of glycine. The H protein shuttles the methylamine group of glycine from the P protein to the T protein. This Gloeothece citriformis (strain PCC 7424) (Cyanothece sp. (strain PCC 7424)) protein is Glycine cleavage system H protein.